The chain runs to 466 residues: MNTKLNDFKKKIKNKKVAVLGIGISHTPLISYLYRLGADITAFDKADEVKLKSTLEQFKGMDIKYSLGEGYLDNLKGFDILFRTPGMRYDIPEILAAKEEGTEVTSEMEVFFELCPAEIFAVTGSDGKTTTTTLIYNMLKEQGYKCWLGGNIGIPLLSKIEEIKDTDKVVLELSSFQLHTMTKSPNVAVVTNVSPNHLDVHKSMEEYVSAKKNIFRYQSAEDRLVLNFDNDITREFAGEAKGDVVYFSRKTVLEKGAMLKDDMLVFRDGETETEIAKASDIVIPGVHNVENFLAATAAVIDCVDRDVIRKVATTFTGVEHRIELVREINGVKFYNDSIASSPTRTIAGLNSFKDKVILIAGGYDKKIPYDALGPVIAEKVKCLVLIGQTAPKIEKVLRDETERSGKGSDIPIKKCTSLEEAVKVAYRFASVGDVVILSPASASFDMFKNFEERGNRFKEIVNSIEA.

124 to 130 lines the ATP pocket; sequence GSDGKTT.

This sequence belongs to the MurCDEF family.

It is found in the cytoplasm. The enzyme catalyses UDP-N-acetyl-alpha-D-muramoyl-L-alanine + D-glutamate + ATP = UDP-N-acetyl-alpha-D-muramoyl-L-alanyl-D-glutamate + ADP + phosphate + H(+). Its pathway is cell wall biogenesis; peptidoglycan biosynthesis. In terms of biological role, cell wall formation. Catalyzes the addition of glutamate to the nucleotide precursor UDP-N-acetylmuramoyl-L-alanine (UMA). The chain is UDP-N-acetylmuramoylalanine--D-glutamate ligase from Acetivibrio thermocellus (strain ATCC 27405 / DSM 1237 / JCM 9322 / NBRC 103400 / NCIMB 10682 / NRRL B-4536 / VPI 7372) (Clostridium thermocellum).